The sequence spans 351 residues: Photosystem II D2 protein (351 aa).

Residues 39 to 59 traverse the membrane as a helical segment; the sequence is TAYLALGGWFTGTTFVTSWYT. His116 serves as a coordination point for chlorophyll a. A helical transmembrane segment spans residues 123–139; it reads GFMLRQFEIARLVGIRP. Residues Gln128 and Asn141 each coordinate pheophytin a. The helical transmembrane segment at 151–164 threads the bilayer; that stretch reads VFLACFLIYPLGQH. His196 is a binding site for chlorophyll a. The chain crosses the membrane as a helical span at residues 206–226; the sequence is GALLCGIHGATVQNTLFEDGA. A plastoquinone contacts are provided by His213 and Phe260. Position 213 (His213) interacts with Fe cation. Position 267 (His267) interacts with Fe cation. A helical membrane pass occupies residues 277–293; sequence GMWTPSVGIVGLAVNLR.

The protein belongs to the reaction center PufL/M/PsbA/D family. PSII is composed of 1 copy each of membrane proteins PsbA, PsbB, PsbC, PsbD, PsbE, PsbF, PsbH, PsbI, PsbJ, PsbK, PsbL, PsbM, PsbT, PsbX, PsbY, Psb30/Ycf12, peripheral proteins PsbO, CyanoQ (PsbQ), PsbU, PsbV and a large number of cofactors. It forms dimeric complexes. Requires The D1/D2 heterodimer binds P680, chlorophylls that are the primary electron donor of PSII, and subsequent electron acceptors. It shares a non-heme iron and each subunit binds pheophytin, quinone, additional chlorophylls, carotenoids and lipids. There is also a Cl(-1) ion associated with D1 and D2, which is required for oxygen evolution. The PSII complex binds additional chlorophylls, carotenoids and specific lipids. as cofactor.

The protein resides in the cellular thylakoid membrane. The enzyme catalyses 2 a plastoquinone + 4 hnu + 2 H2O = 2 a plastoquinol + O2. Its function is as follows. Photosystem II (PSII) is a light-driven water:plastoquinone oxidoreductase that uses light energy to abstract electrons from H(2)O, generating O(2) and a proton gradient subsequently used for ATP formation. It consists of a core antenna complex that captures photons, and an electron transfer chain that converts photonic excitation into a charge separation. The D1/D2 (PsbA/PsbD) reaction center heterodimer binds P680, the primary electron donor of PSII as well as several subsequent electron acceptors. D2 is needed for assembly of a stable PSII complex. The chain is Photosystem II D2 protein from Prochlorococcus marinus (strain MIT 9313).